The primary structure comprises 404 residues: Cysteine desulfurase IscS (404 aa).

Residues 75 to 76, asparagine 155, glutamine 183, and 203 to 205 contribute to the pyridoxal 5'-phosphate site; these read AT and SAH. An N6-(pyridoxal phosphate)lysine modification is found at lysine 206. A pyridoxal 5'-phosphate-binding site is contributed by threonine 243. Cysteine 328 functions as the Cysteine persulfide intermediate in the catalytic mechanism. Residue cysteine 328 coordinates [2Fe-2S] cluster.

This sequence belongs to the class-V pyridoxal-phosphate-dependent aminotransferase family. NifS/IscS subfamily. As to quaternary structure, homodimer. Forms a heterotetramer with IscU, interacts with other sulfur acceptors. Pyridoxal 5'-phosphate is required as a cofactor.

It is found in the cytoplasm. It catalyses the reaction (sulfur carrier)-H + L-cysteine = (sulfur carrier)-SH + L-alanine. It functions in the pathway cofactor biosynthesis; iron-sulfur cluster biosynthesis. Functionally, master enzyme that delivers sulfur to a number of partners involved in Fe-S cluster assembly, tRNA modification or cofactor biosynthesis. Catalyzes the removal of elemental sulfur atoms from cysteine to produce alanine. Functions as a sulfur delivery protein for Fe-S cluster synthesis onto IscU, an Fe-S scaffold assembly protein, as well as other S acceptor proteins. In Pseudomonas putida (strain ATCC 700007 / DSM 6899 / JCM 31910 / BCRC 17059 / LMG 24140 / F1), this protein is Cysteine desulfurase IscS.